We begin with the raw amino-acid sequence, 471 residues long: Ribulose bisphosphate carboxylase large chain (471 aa).

Residue K5 is modified to N6,N6,N6-trimethyllysine. Substrate is bound by residues N114 and T164. Catalysis depends on K166, which acts as the Proton acceptor. A substrate-binding site is contributed by K168. Mg(2+) is bound by residues K192, D194, and E195. Position 192 is an N6-carboxylysine (K192). H285 (proton acceptor) is an active-site residue. Substrate-binding residues include R286, H318, and S370.

The protein belongs to the RuBisCO large chain family. Type I subfamily. Heterohexadecamer of 8 large chains and 8 small chains; disulfide-linked. The disulfide link is formed within the large subunit homodimers. Mg(2+) is required as a cofactor. The disulfide bond which can form in the large chain dimeric partners within the hexadecamer appears to be associated with oxidative stress and protein turnover.

Its subcellular location is the plastid. It is found in the chloroplast. The catalysed reaction is 2 (2R)-3-phosphoglycerate + 2 H(+) = D-ribulose 1,5-bisphosphate + CO2 + H2O. It catalyses the reaction D-ribulose 1,5-bisphosphate + O2 = 2-phosphoglycolate + (2R)-3-phosphoglycerate + 2 H(+). Its function is as follows. RuBisCO catalyzes two reactions: the carboxylation of D-ribulose 1,5-bisphosphate, the primary event in carbon dioxide fixation, as well as the oxidative fragmentation of the pentose substrate in the photorespiration process. Both reactions occur simultaneously and in competition at the same active site. In Strychnos nux-vomica (Poison nut), this protein is Ribulose bisphosphate carboxylase large chain.